Consider the following 437-residue polypeptide: Dolichyl-diphosphooligosaccharide--protein glycosyltransferase 48 kDa subunit (437 aa).

A signal peptide spans 1 to 24; it reads MVNLSRSVALISVFLLPLLSFSFS. Topologically, residues 25–414 are lumenal; that stretch reads VDNPTDRRVL…YERFIPTAYP (390 aa). A helical transmembrane segment spans residues 415–435; sequence YYGACFTTMAGFFVFSFVYLY. Topologically, residues 436 to 437 are cytoplasmic; sequence HK.

The protein belongs to the DDOST 48 kDa subunit family. In terms of assembly, component of the oligosaccharyltransferase (OST) complex.

The protein localises to the endoplasmic reticulum membrane. The protein operates within protein modification; protein glycosylation. Functionally, subunit of the oligosaccharyl transferase (OST) complex that catalyzes the initial transfer of a defined glycan (Glc(3)Man(9)GlcNAc(2) in eukaryotes) from the lipid carrier dolichol-pyrophosphate to an asparagine residue within an Asn-X-Ser/Thr consensus motif in nascent polypeptide chains, the first step in protein N-glycosylation. N-glycosylation occurs cotranslationally and the complex associates with the Sec61 complex at the channel-forming translocon complex that mediates protein translocation across the endoplasmic reticulum (ER). All subunits are required for a maximal enzyme activity. The polypeptide is Dolichyl-diphosphooligosaccharide--protein glycosyltransferase 48 kDa subunit (OST48) (Arabidopsis thaliana (Mouse-ear cress)).